A 222-amino-acid polypeptide reads, in one-letter code: uncharacterized protein (222 aa).

This is an uncharacterized protein from Fowlpox virus (strain NVSL) (FPV).